The primary structure comprises 490 residues: One cut domain family member 3 (490 aa).

3 disordered regions span residues 130–155 (GAHGGHPHAHPHPATAPPPPPPQRLA), 193–213 (LSPLPSALPPALHSAPQPPPP), and 287–316 (HGPHSGGGGPGGGGGAGGGSGGPGAGAAAE). The segment covering 143-152 (ATAPPPPPPQ) has biased composition (pro residues). Residues 290 to 311 (HSGGGGPGGGGGAGGGSGGPGA) are compositionally biased toward gly residues. The segment at residues 309-395 (PGAGAAAEEI…QRMSALRLAA (87 aa)) is a DNA-binding region (CUT). The segment at residues 411-470 (PKKQRLVFTDLQRRTLIAIFKENKRPSKEMQATISQQLGLELNTVSNFFMNARRRCMNRW) is a DNA-binding region (homeobox).

This sequence belongs to the CUT homeobox family. Specifically expressed in brain, stomach and gut. Within the gut, expressed only in duodenum and jejunum.

The protein localises to the nucleus. Functionally, transcriptional activator. Binds the consensus DNA sequence 5'-DHWATTGAYTWWD-3' on a variety of gene promoters such as those of HNF3B and TTR. The chain is One cut domain family member 3 (Onecut3) from Mus musculus (Mouse).